The primary structure comprises 340 residues: Ketol-acid reductoisomerase (NADP(+)) (340 aa).

A KARI N-terminal Rossmann domain is found at 2–182 (AELYYDNQAD…GCTRAGVLRT (181 aa)). NADP(+)-binding positions include 25–28 (FGSQ), serine 51, serine 53, and 83–86 (DIGQ). Residue histidine 108 is part of the active site. Residue glycine 134 coordinates NADP(+). A KARI C-terminal knotted domain is found at 183 to 328 (TFAEETETDL…RELRRMMPFV (146 aa)). Positions 191, 195, 227, and 231 each coordinate Mg(2+). A substrate-binding site is contributed by serine 252.

It belongs to the ketol-acid reductoisomerase family. The cofactor is Mg(2+).

It catalyses the reaction (2R)-2,3-dihydroxy-3-methylbutanoate + NADP(+) = (2S)-2-acetolactate + NADPH + H(+). It carries out the reaction (2R,3R)-2,3-dihydroxy-3-methylpentanoate + NADP(+) = (S)-2-ethyl-2-hydroxy-3-oxobutanoate + NADPH + H(+). It participates in amino-acid biosynthesis; L-isoleucine biosynthesis; L-isoleucine from 2-oxobutanoate: step 2/4. It functions in the pathway amino-acid biosynthesis; L-valine biosynthesis; L-valine from pyruvate: step 2/4. Its function is as follows. Involved in the biosynthesis of branched-chain amino acids (BCAA). Catalyzes an alkyl-migration followed by a ketol-acid reduction of (S)-2-acetolactate (S2AL) to yield (R)-2,3-dihydroxy-isovalerate. In the isomerase reaction, S2AL is rearranged via a Mg-dependent methyl migration to produce 3-hydroxy-3-methyl-2-ketobutyrate (HMKB). In the reductase reaction, this 2-ketoacid undergoes a metal-dependent reduction by NADPH to yield (R)-2,3-dihydroxy-isovalerate. This Chloroflexus aurantiacus (strain ATCC 29366 / DSM 635 / J-10-fl) protein is Ketol-acid reductoisomerase (NADP(+)).